The following is a 241-amino-acid chain: Deoxynucleotide monophosphate kinase (241 aa).

A dGMP-binding site is contributed by Lys10. Residues Arg11, Gly13, Asp15, and Thr16 each coordinate ATP. DGMP contacts are provided by Ile36 and Lys37. Position 42 (Tyr42) interacts with Mg(2+). Residue Arg68 coordinates dGMP. Mg(2+) is bound by residues Gln85 and Glu108. Residues Arg132, Gly139, Thr140, Val144, Trp152, Asp175, Arg177, Gln178, Glu181, and Thr208 each contribute to the dGMP site.

Belongs to the dNMP kinase family. Homodimer. The cofactor is Mg(2+).

The catalysed reaction is dTMP + ATP = dTDP + ADP. It catalyses the reaction dGMP + ATP = dGDP + ADP. The enzyme catalyses 5-hydroxymethyl-dCMP + ATP = 5-hydroxymethyl-dCDP + ADP. Its activity is regulated as follows. Inhibited by pyridoxal 5'-phosphate and diethylpyrocarbonate. Functionally, allows the synthesis of deoxyribonucleoside triphosphates necessary for the rapid viral DNA replication. Phosphorylates dGMP, dTMP and 5-hydroxymethyl-dCMP (hmdCMP) while excluding dCMP and dAMP. The phosphorylation of 5-hydroxymethyl-dCMP represents the first step in the replacement of cytosine by hydroxymethylcytosine in new viral DNA genomes. The protein is Deoxynucleotide monophosphate kinase (1) of Enterobacteria phage T4 (Bacteriophage T4).